The sequence spans 260 residues: Dehydrogenase/reductase SDR family member 11 (260 aa).

The signal sequence occupies residues 1–30 (MARPGMERWRDRLALVTGASGGIGAAVARA). Residues 18–23 (GASGGI), 43–44 (RT), Glu-49, 70–71 (DL), and Asn-97 contribute to the NADP(+) site. 2 residues coordinate substrate: Ser-151 and Tyr-166. Residues Tyr-166, Lys-170, 201–204 (VETQ), and Lys-208 contribute to the NADP(+) site. Tyr-166 functions as the Proton acceptor in the catalytic mechanism.

The protein belongs to the short-chain dehydrogenases/reductases (SDR) family. As to quaternary structure, homotetramer. As to expression, isoform 1: Ubiquitously expressed, with highest levels in testis, small intestine, colon, kidney, brain and heart. Isoform 3: Expressed in brain, heart and skeletal muscle.

It is found in the secreted. It carries out the reaction a 3beta-hydroxysteroid + NADP(+) = a 3-oxosteroid + NADPH + H(+). The catalysed reaction is 17beta-estradiol + NAD(+) = estrone + NADH + H(+). The enzyme catalyses 17beta-estradiol + NADP(+) = estrone + NADPH + H(+). The protein operates within steroid biosynthesis; estrogen biosynthesis. Inhibited by flavonoids including apigenin, luteolin, genistein, kaempferol and quercetin and also by carbenoxolone, zearalenone, glycyrrhetinic, curcumin and flufenamic acid. In terms of biological role, catalyzes the conversion of the 17-keto group of estrone, 4- and 5-androstenes and 5-alpha-androstanes into their 17-beta-hydroxyl metabolites and the conversion of the 3-keto group of 3-, 3,17- and 3,20- diketosteroids into their 3-hydroxyl metabolites. Exhibits reductive 3-beta-hydroxysteroid dehydrogenase activity toward 5-beta-androstanes, 5-beta-pregnanes, 4-pregnenes and bile acids. May also reduce endogenous and exogenous alpha-dicarbonyl compounds and xenobiotic alicyclic ketones. The chain is Dehydrogenase/reductase SDR family member 11 (DHRS11) from Homo sapiens (Human).